The following is a 705-amino-acid chain: MKKYLLEIGCEELPPKAVDTAISYFKERLEGLFENFFEYRTEENISVFGTPRRIGFILSNLREKEPSEEKTILGPPAKVGIDEKGNFTKAALAFASKNNIPVEQLKIIENEKGRYIGATLIKEGKDIRTFIQEVIPDLITKIPFPKLMRWNETGFRFSRPVRWIVSLLDNEVVSFSIAGIDADRYTHLHRFMTTPTGRGERKKIPDVDSYFQIMKLGFIIPKYEERKEAVKTQLTGFANSINAEPVIDEDLLDEVTNLTEFPVGILGDFSPEYLILPKEVIITVCKVHQRYFNFEKDGKLIPKFLAFSNTAVKDREKVKSGYEKVLKARLEDALFFYEEDLKHNLEDFYPQLEGIQFHHKLGSMLDKVKRNGEIAVLLSRELNFENLKDLLRANKLSKCDLLTEMVKEFDELQGIMGMHYALKQGEKEEVAKAIYEHYLPKTSDDQLPETDIGTLLSLSDKLDTVISFISIGEKPKATADPFGIRRNSIGIVRILVEKGIDLDLKKLLQDISREARKVKILRLADIEKEWEIIFDERTIPEILDFIEGRFIAYMKDKGFDTDIINSVVSVDSYNLYRNYLKIKSIQELKKNPEFTDIMTVFKRVGRIIPEEFEEHFNPDTLVQDEEKELYRKYTEVNKIFSKDVEDRRYTEALNELLKMKPFIDKFFDNVMVMTEDKKLRENRLSLMKLINNMFRKIADFTKITT.

Belongs to the class-II aminoacyl-tRNA synthetase family. As to quaternary structure, tetramer of two alpha and two beta subunits.

The protein resides in the cytoplasm. The catalysed reaction is tRNA(Gly) + glycine + ATP = glycyl-tRNA(Gly) + AMP + diphosphate. This is Glycine--tRNA ligase beta subunit from Persephonella marina (strain DSM 14350 / EX-H1).